The sequence spans 236 residues: Serine/arginine-rich SC35-like splicing factor SCL28 (236 aa).

2 disordered regions span residues 1–53 (MARA…LIRN) and 124–219 (EENR…RVLT). Basic and acidic residues predominate over residues 14–43 (RPRDRSPPRERKGYDDNRLRERPSSRDHES). Positions 47–125 (SGLLIRNLPL…REIAIVFAEE (79 aa)) constitute an RRM domain. Residues 149-176 (TSHRSPRRRYRSHSRSRSPPRRESRHSK) are compositionally biased toward basic residues. Ser-184 carries the post-translational modification Phosphoserine. A compositionally biased stretch (basic and acidic residues) spans 199 to 217 (RNEREYKSRNCRSPREERV).

This sequence belongs to the splicing factor SR family. SCL subfamily. In terms of assembly, component of the spliceosome. Interacts with RS2Z33, CYP59, CYP63 and CYP95.

Its subcellular location is the nucleus speckle. Functionally, involved in intron recognition and spliceosome assembly. Probably active at the 5' splice sites. The chain is Serine/arginine-rich SC35-like splicing factor SCL28 (SCL28) from Arabidopsis thaliana (Mouse-ear cress).